The following is a 358-amino-acid chain: S-adenosylmethionine decarboxylase proenzyme (358 aa).

Catalysis depends on residues E11 and E14. The active-site Schiff-base intermediate with substrate; via pyruvic acid is the S71. S71 carries the pyruvic acid (Ser); by autocatalysis modification. C85 acts as the Proton donor; for catalytic activity in catalysis. Catalysis depends on proton acceptor; for processing activity residues S234 and H247.

It belongs to the eukaryotic AdoMetDC family. Pyruvate serves as cofactor. In terms of processing, is synthesized initially as an inactive proenzyme. Formation of the active enzyme involves a self-maturation process in which the active site pyruvoyl group is generated from an internal serine residue via an autocatalytic post-translational modification. Two non-identical subunits are generated from the proenzyme in this reaction, and the pyruvate is formed at the N-terminus of the alpha chain, which is derived from the carboxyl end of the proenzyme. The post-translation cleavage follows an unusual pathway, termed non-hydrolytic serinolysis, in which the side chain hydroxyl group of the serine supplies its oxygen atom to form the C-terminus of the beta chain, while the remainder of the serine residue undergoes an oxidative deamination to produce ammonia and the pyruvoyl group blocking the N-terminus of the alpha chain.

It carries out the reaction S-adenosyl-L-methionine + H(+) = S-adenosyl 3-(methylsulfanyl)propylamine + CO2. It participates in amine and polyamine biosynthesis; S-adenosylmethioninamine biosynthesis; S-adenosylmethioninamine from S-adenosyl-L-methionine: step 1/1. The polypeptide is S-adenosylmethionine decarboxylase proenzyme (SAMDC) (Solanum chilense (Tomato)).